The chain runs to 488 residues: Glutamyl-tRNA(Gln) amidotransferase subunit A (488 aa).

Active-site charge relay system residues include lysine 77 and serine 152. Serine 176 functions as the Acyl-ester intermediate in the catalytic mechanism.

Belongs to the amidase family. GatA subfamily. As to quaternary structure, heterotrimer of A, B and C subunits.

It carries out the reaction L-glutamyl-tRNA(Gln) + L-glutamine + ATP + H2O = L-glutaminyl-tRNA(Gln) + L-glutamate + ADP + phosphate + H(+). Its function is as follows. Allows the formation of correctly charged Gln-tRNA(Gln) through the transamidation of misacylated Glu-tRNA(Gln) in organisms which lack glutaminyl-tRNA synthetase. The reaction takes place in the presence of glutamine and ATP through an activated gamma-phospho-Glu-tRNA(Gln). The sequence is that of Glutamyl-tRNA(Gln) amidotransferase subunit A from Streptococcus equi subsp. zooepidemicus (strain H70).